We begin with the raw amino-acid sequence, 148 residues long: Large ribosomal subunit protein bL9 (148 aa).

This sequence belongs to the bacterial ribosomal protein bL9 family.

In terms of biological role, binds to the 23S rRNA. This Prosthecochloris aestuarii (strain DSM 271 / SK 413) protein is Large ribosomal subunit protein bL9.